The following is a 214-amino-acid chain: Thiamine-phosphate synthase (214 aa).

Residues 37-41 (QYREK) and N73 contribute to the 4-amino-2-methyl-5-(diphosphooxymethyl)pyrimidine site. 2 residues coordinate Mg(2+): D74 and D93. S112 is a binding site for 4-amino-2-methyl-5-(diphosphooxymethyl)pyrimidine. Residue 139–141 (TIS) participates in 2-[(2R,5Z)-2-carboxy-4-methylthiazol-5(2H)-ylidene]ethyl phosphate binding. K142 provides a ligand contact to 4-amino-2-methyl-5-(diphosphooxymethyl)pyrimidine. 2-[(2R,5Z)-2-carboxy-4-methylthiazol-5(2H)-ylidene]ethyl phosphate contacts are provided by residues G171 and 191–192 (IS).

Belongs to the thiamine-phosphate synthase family. The cofactor is Mg(2+).

It carries out the reaction 2-[(2R,5Z)-2-carboxy-4-methylthiazol-5(2H)-ylidene]ethyl phosphate + 4-amino-2-methyl-5-(diphosphooxymethyl)pyrimidine + 2 H(+) = thiamine phosphate + CO2 + diphosphate. The catalysed reaction is 2-(2-carboxy-4-methylthiazol-5-yl)ethyl phosphate + 4-amino-2-methyl-5-(diphosphooxymethyl)pyrimidine + 2 H(+) = thiamine phosphate + CO2 + diphosphate. It catalyses the reaction 4-methyl-5-(2-phosphooxyethyl)-thiazole + 4-amino-2-methyl-5-(diphosphooxymethyl)pyrimidine + H(+) = thiamine phosphate + diphosphate. The protein operates within cofactor biosynthesis; thiamine diphosphate biosynthesis; thiamine phosphate from 4-amino-2-methyl-5-diphosphomethylpyrimidine and 4-methyl-5-(2-phosphoethyl)-thiazole: step 1/1. In terms of biological role, condenses 4-methyl-5-(beta-hydroxyethyl)thiazole monophosphate (THZ-P) and 2-methyl-4-amino-5-hydroxymethyl pyrimidine pyrophosphate (HMP-PP) to form thiamine monophosphate (TMP). This Listeria monocytogenes serovar 1/2a (strain ATCC BAA-679 / EGD-e) protein is Thiamine-phosphate synthase.